The sequence spans 163 residues: C-type lectin lectoxin-Lio1 (163 aa).

The signal sequence occupies residues 1-21; sequence MERFIFAALLVVALSLSGTGA. 3 cysteine pairs are disulfide-bonded: Cys25-Cys36, Cys53-Cys152, and Cys127-Cys144. Residues 32–153 form the C-type lectin domain; sequence SDGYCYKVFK…CRSKRYFICK (122 aa). Positions 117–119 match the Mannose-binding motif; the sequence is EPN. Glu125 and Asp141 together coordinate Ca(2+).

It belongs to the true venom lectin family. As to expression, expressed by the venom gland.

The protein localises to the secreted. In terms of biological role, mannose-binding lectin which recognizes specific carbohydrate structures and agglutinates a variety of animal cells by binding to cell-surface glycoproteins and glycolipids. May be a calcium-dependent lectin. This Erythrolamprus poecilogyrus (Water snake) protein is C-type lectin lectoxin-Lio1.